The primary structure comprises 663 residues: Nuclear receptor-binding protein homolog (663 aa).

Positions 1-14 are enriched in low complexity; sequence MSNSQANAGSSGSA. The segment at 1 to 112 is disordered; sequence MSNSQANAGS…SEDESEILEE (112 aa). Residues 19–46 are compositionally biased toward polar residues; sequence LNPSGSATLVPNLTTTNASSQATPASTI. Composition is skewed to low complexity over residues 47–57 and 81–94; these read PQQQQPQQSQP and VVVAGGSEGVNLDS. Residues 101-111 are compositionally biased toward acidic residues; sequence DDSEDESEILE. In terms of domain architecture, Protein kinase spans 122-392; that stretch reads REEVDQRDVP…ANDLLFHPLL (271 aa). Disordered stretches follow at residues 481–505 and 638–663; these read PNFRSRAASPERADSVKSATPEPVD and YVPQDQQQYQQQQQEADVDQSGTTSN. Phosphoserine is present on residues S489, S495, and S498. At T500 the chain carries Phosphothreonine. The segment covering 641–652 has biased composition (low complexity); it reads QDQQQYQQQQQE.

The protein belongs to the protein kinase superfamily. Ser/Thr protein kinase family.

The protein localises to the cytoplasm. It localises to the cell cortex. In terms of biological role, may play a role in subcellular trafficking between the endoplasmic reticulum and Golgi apparatus. The chain is Nuclear receptor-binding protein homolog from Drosophila pseudoobscura pseudoobscura (Fruit fly).